Consider the following 900-residue polypeptide: Protein translocase subunit SecA (900 aa).

ATP is bound by residues Gln-87, 105–109 (GEGKT), and Asp-512. The segment at 849 to 900 (ERLAQQQQFSHQEEDSLNTGSPAQADRKIGRNDPCPCGSGKKYKQCHGRLQK) is disordered. Positions 883, 885, 894, and 895 each coordinate Zn(2+). The span at 889-900 (KKYKQCHGRLQK) shows a compositional bias: basic residues.

Belongs to the SecA family. In terms of assembly, monomer and homodimer. Part of the essential Sec protein translocation apparatus which comprises SecA, SecYEG and auxiliary proteins SecDF-YajC and YidC. Requires Zn(2+) as cofactor.

The protein resides in the cell inner membrane. It localises to the cytoplasm. It carries out the reaction ATP + H2O + cellular proteinSide 1 = ADP + phosphate + cellular proteinSide 2.. Functionally, part of the Sec protein translocase complex. Interacts with the SecYEG preprotein conducting channel. Has a central role in coupling the hydrolysis of ATP to the transfer of proteins into and across the cell membrane, serving both as a receptor for the preprotein-SecB complex and as an ATP-driven molecular motor driving the stepwise translocation of polypeptide chains across the membrane. This Pectobacterium atrosepticum (strain SCRI 1043 / ATCC BAA-672) (Erwinia carotovora subsp. atroseptica) protein is Protein translocase subunit SecA.